The following is a 241-amino-acid chain: Co-chaperone protein p23-1 (241 aa).

The 90-residue stretch at 2–91 (SRHPEVKWAE…AEPERWNKLL (90 aa)) folds into the CS domain. MGG repeat units lie at residues 129-131 (MGG), 132-134 (MGG), 135-137 (MGG), 138-140 (MGG), 141-143 (MGG), 144-146 (MGG), 147-149 (MGG), 150-152 (MGG), 162-164 (MGG), 165-167 (MGG), 168-170 (MGG), 171-173 (MGG), 180-182 (MGG), 183-185 (MGG), 186-188 (MGG), 189-191 (MGG), and 192-194 (MGG). The interval 129–194 (MGGMGGMGGM…GMGGMGGMGG (66 aa)) is 17 X 3 AA repeats of M-G-G. Positions 188–241 (GMGGMGGMEEFEDSDDEEETAKSGDKKDDAVKEEGLATEKAPAAEETTSVKEDK) are disordered. Positions 196–206 (EEFEDSDDEEE) are enriched in acidic residues. Residues 207-224 (TAKSGDKKDDAVKEEGLA) show a composition bias toward basic and acidic residues. Residues 225–234 (TEKAPAAEET) show a composition bias toward low complexity.

Belongs to the p23/wos2 family. As to quaternary structure, interacts with HSP90 in an ATP-dependent manner. Interacts with HSP90-5, HSP90-6 and HSP90-7. In terms of tissue distribution, widely expressed but preferentially in the root meristem.

It localises to the cytoplasm. Its subcellular location is the nucleus. Acts as a co-chaperone for HSP90. Controls root development through the modulation of auxin distribution in the root meristem. This Arabidopsis thaliana (Mouse-ear cress) protein is Co-chaperone protein p23-1.